We begin with the raw amino-acid sequence, 118 residues long: Small ribosomal subunit protein uS13 (118 aa).

The interval 92-118 (RRSLPVRGQRTKTNARTRKGPRKPIKK) is disordered.

It belongs to the universal ribosomal protein uS13 family. Part of the 30S ribosomal subunit. Forms a loose heterodimer with protein S19. Forms two bridges to the 50S subunit in the 70S ribosome.

Functionally, located at the top of the head of the 30S subunit, it contacts several helices of the 16S rRNA. In the 70S ribosome it contacts the 23S rRNA (bridge B1a) and protein L5 of the 50S subunit (bridge B1b), connecting the 2 subunits; these bridges are implicated in subunit movement. Contacts the tRNAs in the A and P-sites. The chain is Small ribosomal subunit protein uS13 from Acinetobacter baylyi (strain ATCC 33305 / BD413 / ADP1).